Reading from the N-terminus, the 2061-residue chain is MSTWVALNIEPDEAIEEEVDDTKEIQIEEALKLYQNALKLHSQGPRYYKQAGEAYEALLDSEIFKYPESLSDHKRAALQDAEPQVGGTTNDAVVGEAALDFNINDTTSSTLQQTIYLSYKNHGQYVLDALRASLQELSKLSEDSSHLSSKIAESSTTALAQFAEALERDDTDLNLWRQSARLCSALQSYRLTRFCLESVLADDDNRLEVRSEQLGLEETFAEEGLRKTLHSVQDRLSVSLVPIKKPKKALLKFFKQQSDPYPYLPSLPDNLQDLDSSRNPLAFRASTHEIKIDSLTWAAIGQAILTFLDDKNGTPSLAPGTSITISLPADSPELKTASITAQRRPSKAQVDENNNQDVQMDDAQSVGARSVTGAQGRELAMEHGDDQSSVDQRAEKQLIESLEVQSIQHQQSTDPQEDIKAEEDDLKYPENTSRKRSSGSAITEDQAERLRVKSRRTRLRDSLAEASTHTDDVVFDQAKYYEDLLEPYIQTDEGVFGTVGALLSKLGVEDLGTFEELRRSVASAGERKDSPVTPVNIDNAEVLLQDLRNVLTQWDERLYQVMQQSDSLAGLQDIKSMGRSGLAVFLEHSKKTTHKLKLKQTFSGEDELFDFIRAVNGSRLHLHDVVFEWLGCLLRPDYKNFLTHDNQFNDWSLVESSYVAYQWPTTLKDVVLQLLSLEDEYIHGKLEEGMQTLEHHILEAQSGTPFRYTAKHFADLEMIQAIYELHLDLYAPMNAPNNETDHRTRTLQQDRLARWSMLARSALTHFIDCCPERVNRERITIRHIWASTFHSNMGVDAQREHILLCLEDLKRLFSCLNEPVLSLANSSIMSELSCEAIDQEISKLNSMDFFTRIFNPDSEDPVGLIETIEPIVEPSAVQFEEGSEDRQSLQRREMGSFLDRGDATLRLFLWRRLQDAYRKIDYPPKVVSCHLRSIETIIKELRSQAYVEEPGEHRQATLVRWLKSLDGMLSKTVTTVLQESDKAYDCFDTEHVKSSMSAVAFLIRLLHSFVLYDDSVRVGQSPGIDLRAALAKSLENFKEKMRDMLVRCWVLLYTLLKEAIAQNQEMFDEPLEDRVYYLRAVHNSLGLRQMCKRSRNQFLKLVKSELLALDVEQDIEADICQILFDIHGVKLSLSDHLLSDHGCVPEKLDRSTAIMMIDFVMKQAKKINIKDLSKSELKNTIEKMQQSIGTTKAVPPVSYNRRILNAYLKTPINPSELVRAIQGVTDLPFIPVPSQTAVIANSGWYFLLGYAALTKFRSQKRLNPVPTTDLDEAISWFRQDLEHNTSRWESWYRLAQVWDSKVEEDITWSADKINNNRTELVTWQRNAIHCYAMAVATAAKTAESGPETGALLADLYTDFGIRLYSSSREPLSMAAFSVADFTRHFSNEESQQMYEGRPFKEMKVYNVWRLAAFLLRQALVDKPKNWMTHYMLSKCLWKMFSCDDSVRGSSKRISLDSVLDSLLDTIDALPQRKDSRSEPIFEPHYKLVSIIHKLVIKEVLTPAEASKTLVATPWARKVPACEDRNSWKKYILDVLKNLKNADKANWHHRMAVRSARIIYDDNKGAIAAAEAKSELTQQIFTKTMTIQVWKPEYERPGRHFVYTTRYAYFFVTLLDQLDDRANLEQLLRRVRKKQGDFINHTKLWEDMCLTYARVIRRAAGISEGHEESVFKPIGWEEFSSNTARLEELPQLAPESPSLLELLRDAIELKKLNNNLMKVALLEDLIADVYSRIYEVNLPILLEQVDEENKEKMKVDHILMTADGAATADTSTPPTSAPASEAPAPRGRTKGIARRDIQKRAEAIVSRKVPPRAPATKAPTTTETESATNATNSVGPKPVVEISVRQPPAAVVDSAGQQSDIPNSLHDSADDESELSEIDEDKLSKLAADPKMLFPNFGHRSRGSLEPDSELSAQASPSGDADVANENEEVGELEGDDREGEDEGEAGPDADLEEESMNDGDGDGDGDEAGEGEGENENENGNDGNVSGNDEDDDVDMEAGEEEEEAPGQDGEIEGNTTMEGTDAADGEDPEHVHRQEQEQEQQVGGEQEGETVYDTELATEL.

Disordered stretches follow at residues I339 to S370, E403 to R460, and A1765 to L2061. Residues E403 to D414 show a composition bias toward polar residues. Positions A1765–P1784 are enriched in low complexity. Basic and acidic residues predominate over residues A1792–E1801. Residues P1813–S1832 show a composition bias toward low complexity. Composition is skewed to acidic residues over residues A1868 to E1879, V1922 to N1979, N1988 to I2012, and Q2047 to L2061.

This sequence belongs to the HIR3 family.

The protein localises to the nucleus. Functionally, has a role in a nucleosome assembly pathway that is required for the integrity of heterochromatin and proper chromosome segregation. This is Histone transcription regulator 3 homolog (hir3) from Emericella nidulans (strain FGSC A4 / ATCC 38163 / CBS 112.46 / NRRL 194 / M139) (Aspergillus nidulans).